The following is a 232-amino-acid chain: Large ribosomal subunit protein uL1 (232 aa).

Belongs to the universal ribosomal protein uL1 family. Part of the 50S ribosomal subunit.

In terms of biological role, binds directly to 23S rRNA. The L1 stalk is quite mobile in the ribosome, and is involved in E site tRNA release. Protein L1 is also a translational repressor protein, it controls the translation of the L11 operon by binding to its mRNA. This chain is Large ribosomal subunit protein uL1, found in Phocaeicola vulgatus (strain ATCC 8482 / DSM 1447 / JCM 5826 / CCUG 4940 / NBRC 14291 / NCTC 11154) (Bacteroides vulgatus).